Consider the following 86-residue polypeptide: Triple QxxK/R motif-containing protein (86 aa).

Residues 51 to 71 form a helical membrane-spanning segment; the sequence is VGLVLAAILALLLAFYAFFYL.

The protein belongs to the TRIQK family.

The protein resides in the endoplasmic reticulum membrane. In terms of biological role, may play a role in cell growth and maintenance of cell morphology. The chain is Triple QxxK/R motif-containing protein (TRIQK) from Homo sapiens (Human).